The chain runs to 456 residues: GTPase Der (456 aa).

EngA-type G domains follow at residues 4-169 (PVVA…PSKD) and 178-353 (VQLA…DQSR). GTP contacts are provided by residues 10-17 (GRPNVGKS), 57-61 (DTGGL), 120-123 (NKCE), 184-191 (GRPNVGKS), 231-235 (DTAGI), and 296-299 (NKWD). Positions 354–439 (RRVTTSVVNE…PIKLFWRGKQ (86 aa)) constitute a KH-like domain.

The protein belongs to the TRAFAC class TrmE-Era-EngA-EngB-Septin-like GTPase superfamily. EngA (Der) GTPase family. As to quaternary structure, associates with the 50S ribosomal subunit.

Functionally, GTPase that plays an essential role in the late steps of ribosome biogenesis. The protein is GTPase Der of Prochlorococcus marinus (strain NATL2A).